Consider the following 263-residue polypeptide: Ribosomal RNA large subunit methyltransferase E (263 aa).

S-adenosyl-L-methionine-binding residues include G48, W50, D68, D88, and D118. Residue K158 is the Proton acceptor of the active site. Residues 205-263 (PVREGDIVEATIEDIGEEGDGIAKVENFTVFVSGVEDGETVEVRIDDVKPRYAFAEPVE) enclose the TRAM domain.

Belongs to the class I-like SAM-binding methyltransferase superfamily. RNA methyltransferase RlmE family.

Its subcellular location is the cytoplasm. It catalyses the reaction uridine(2552) in 23S rRNA + S-adenosyl-L-methionine = 2'-O-methyluridine(2552) in 23S rRNA + S-adenosyl-L-homocysteine + H(+). Functionally, specifically methylates the uridine in position 2552 of 23S rRNA at the 2'-O position of the ribose in the fully assembled 50S ribosomal subunit. The protein is Ribosomal RNA large subunit methyltransferase E of Haloarcula marismortui (strain ATCC 43049 / DSM 3752 / JCM 8966 / VKM B-1809) (Halobacterium marismortui).